Consider the following 189-residue polypeptide: Ribose 1,5-bisphosphate phosphokinase PhnN (189 aa).

Gly10–Asp17 is an ATP binding site.

This sequence belongs to the ribose 1,5-bisphosphokinase family.

The enzyme catalyses alpha-D-ribose 1,5-bisphosphate + ATP = 5-phospho-alpha-D-ribose 1-diphosphate + ADP. Its pathway is metabolic intermediate biosynthesis; 5-phospho-alpha-D-ribose 1-diphosphate biosynthesis; 5-phospho-alpha-D-ribose 1-diphosphate from D-ribose 5-phosphate (route II): step 3/3. Functionally, catalyzes the phosphorylation of ribose 1,5-bisphosphate to 5-phospho-D-ribosyl alpha-1-diphosphate (PRPP). The protein is Ribose 1,5-bisphosphate phosphokinase PhnN of Enterobacter lignolyticus (strain SCF1).